The following is a 38-amino-acid chain: uncharacterized protein (38 aa).

A helical transmembrane segment spans residues 10–32 (FSLLWYFLVGGGKGEVCWRFLGI).

The protein resides in the membrane. This is an uncharacterized protein from Saccharomyces cerevisiae (strain ATCC 204508 / S288c) (Baker's yeast).